The chain runs to 211 residues: Urease accessory protein UreG (211 aa).

Residue Gly-13–Thr-20 participates in GTP binding.

This sequence belongs to the SIMIBI class G3E GTPase family. UreG subfamily. Homodimer. UreD, UreF and UreG form a complex that acts as a GTP-hydrolysis-dependent molecular chaperone, activating the urease apoprotein by helping to assemble the nickel containing metallocenter of UreC. The UreE protein probably delivers the nickel.

Its subcellular location is the cytoplasm. Facilitates the functional incorporation of the urease nickel metallocenter. This process requires GTP hydrolysis, probably effectuated by UreG. The polypeptide is Urease accessory protein UreG (Alkalilimnicola ehrlichii (strain ATCC BAA-1101 / DSM 17681 / MLHE-1)).